Consider the following 156-residue polypeptide: Small ribosomal subunit protein uS7 (156 aa).

It belongs to the universal ribosomal protein uS7 family. In terms of assembly, part of the 30S ribosomal subunit. Contacts proteins S9 and S11.

Functionally, one of the primary rRNA binding proteins, it binds directly to 16S rRNA where it nucleates assembly of the head domain of the 30S subunit. Is located at the subunit interface close to the decoding center, probably blocks exit of the E-site tRNA. The polypeptide is Small ribosomal subunit protein uS7 (Frankia alni (strain DSM 45986 / CECT 9034 / ACN14a)).